The chain runs to 770 residues: 3-isopropylmalate dehydratase (770 aa).

[4Fe-4S] cluster contacts are provided by Cys-354, Cys-415, and Cys-418.

The protein belongs to the aconitase/IPM isomerase family. As to quaternary structure, monomer. [4Fe-4S] cluster serves as cofactor.

The enzyme catalyses (2R,3S)-3-isopropylmalate = (2S)-2-isopropylmalate. It participates in amino-acid biosynthesis; L-leucine biosynthesis; L-leucine from 3-methyl-2-oxobutanoate: step 2/4. Functionally, catalyzes the isomerization between 2-isopropylmalate and 3-isopropylmalate, via the formation of 2-isopropylmaleate. In Candida maltosa (Yeast), this protein is 3-isopropylmalate dehydratase (LEU1).